Here is a 603-residue protein sequence, read N- to C-terminus: Zyxin (603 aa).

The segment covering 1–13 (MGPPPPPPPPPLL) has biased composition (pro residues). 5 disordered regions span residues 1–131 (MGPP…HRDP), 166–193 (TQYA…PYSS), 218–237 (ATTT…NKYG), 310–333 (RDEG…SASS), and 363–395 (LNQP…TTST). Over residues 69 to 95 (VRGDVENLSDGRLDRPHQQLPDGDRTY) the composition is skewed to basic and acidic residues. Residues 184–193 (EATYVSPYSS) show a composition bias toward polar residues. A compositionally biased stretch (low complexity) spans 218–234 (ATTTTSSNSLNENNNSN). Composition is skewed to polar residues over residues 315–333 (TESQ…SASS), 363–373 (LNQPADTSPSI), and 382–391 (PDSSRANYSA). 3 LIM zinc-binding domains span residues 409–470 (NICV…SLEK), 471–529 (CTAC…KFAP), and 530–601 (RCAL…RVVS).

The protein belongs to the zyxin/ajuba family. As to quaternary structure, interacts with dyc-1. Interacts with glh-1 and glh-3. Expressed in neurons and body wall muscle. Expressed in pharyngeal, enteric and uterine muscles and in spermatheca.

It localises to the nucleus. It is found in the cytoplasm. The protein localises to the myofibril. Its subcellular location is the sarcomere. The protein resides in the m line. It localises to the cell projection. It is found in the axon. The protein localises to the cell junction. Its subcellular location is the focal adhesion. The protein resides in the cytoskeleton. Its function is as follows. Functions both as a mechanical stabilizer (via LIM domains) of focal adhesions, and as a sensor component for muscle cell damage (via N-terminus). Regulates, stabilizes and maintains posterior lateral mechanosensory (PLM) synaptic branch extension and new synapse formation and growth during larval development. In Caenorhabditis elegans, this protein is Zyxin.